The chain runs to 548 residues: MSSTVIDRARPAGHRAPHRGSGFTGTLGLLRLYLRRDRVSLPLWVLLLSVPLATVYIASVETVYPDRSARAAAAAAIMASPAQRALYGPVYNDSLGAVGIWKAGMFHTLIAVAVILTVIRHTRADEESGRAELIDSTVVGRYANLTGALLLSFGASIATGAIGALGLLATDVAPAGSVAFGVALAASGMVFTAVAAVAAQLSPSARFTRAVAFAVLGTAFALRAIGDAGSGTLSWCSPLGWSLQVRPYAGERWWVLLLSLATAAVLTVLAYRLRAGRDVGAGLIAERPGAGTAGPMLSEPFGLAWRLNRGSLLLWTVGLCLYGLVMGSVVHGIGDQLGDNTAVRDIVTRMGGTGALEQAFLALAFTMIGMVAAAFAVSLTLRLHQEETGLRAETLLAGAVSRTHWLASHLAMALAGSAVATLISGVAAGLAYGMTVGDVGGKLPTVVGTAAVQLPAVWLLSAVTVGLFGLAPRFTPVAWGVLVGFIALYLLGSLAGFPQMLLNLEPFAHIPRVGGGDFTAVPLLWLLAIDAALITLGAMAFRRRDVRC.

Helical transmembrane passes span 39–59, 99–119, 148–168, 178–198, 210–230, 253–273, 313–333, 359–379, 410–430, 450–470, 477–497, and 521–541; these read VSLPLWVLLLSVPLATVYIAS, GIWKAGMFHTLIAVAVILTVI, ALLLSFGASIATGAIGALGLL, VAFGVALAASGMVFTAVAAVA, AVAFAVLGTAFALRAIGDAGS, WWVLLLSLATAAVLTVLAYRL, LLWTVGLCLYGLVMGSVVHGI, AFLALAFTMIGMVAAAFAVSL, LAMALAGSAVATLISGVAAGL, AAVQLPAVWLLSAVTVGLFGL, VAWGVLVGFIALYLLGSLAGF, and VPLLWLLAIDAALITLGAMAF.

As to quaternary structure, the complex is probably composed of two ATP-binding proteins (Rv1218c) and a transmembrane protein (Rv1217c).

The protein resides in the cell inner membrane. Probably part of the ABC transporter complex Rv1217c-Rv1218c involved in the resistance to a wide range of structurally unrelated drugs. Probably responsible for the translocation of the substrate across the membrane. This is Multidrug efflux system permease protein Rv1217c from Mycobacterium tuberculosis (strain ATCC 25618 / H37Rv).